We begin with the raw amino-acid sequence, 437 residues long: MPESMDAIILKDVVKSFRKRTIRGEYTTFKSELLRWLRGKRQSRDASLITALRGINLTIPKGKTVGIIGRNGSGKSTLLKLITGIYTPTSGDLQINGRISALLDLGAGFHPDFSGRENILINGIILGMTRAEVRARMDEIIAFSELGEFIDEPVRTYSSGMYMRLAFAVATHVDPDILIIDEILAVGDEHFSKKSLAKMMDFKRQGKTIVLVTHELGTVERWCDLAAWIDGGYVRRVGKPSEVTAEYREAISLAEAQSAAFTPPALTEGGGALPQVPSESLPAEGPVRIHRVQLLDARGESLEVLSPEEGLEVRADFSVEGPCEDVDFHVRLQAADGRTLYETSTRSEAVVLSRMPNPGVLRFVVERLGALGGDYSLVVSARASKGESSGRCAFRVVSATEEEGVFRPPHRWLVEPGANSQAGVRFEPGTSPRVEVG.

The ABC transporter domain maps to 37 to 256 (LRGKRQSRDA…YREAISLAEA (220 aa)). 69-76 (GRNGSGKS) contacts ATP.

It belongs to the ABC transporter superfamily.

It localises to the cell inner membrane. May form an ATP-driven O-antigen export apparatus, in association with RfbA. The protein is O-antigen export system ATP-binding protein RfbB (rfbB) of Myxococcus xanthus.